Here is a 609-residue protein sequence, read N- to C-terminus: Albumin (609 aa).

The N-terminal stretch at 1–18 (MKWVTFISLLFLFSSAYS) is a signal peptide. Positions 19 to 24 (RGVFRR) are excised as a propeptide. Albumin domains lie at 19–210 (RGVF…DELR), 211–403 (DEGK…EFKP), and 404–601 (LVEE…KLVA). A Cu cation-binding site is contributed by H27. Phosphoserine is present on S29. 2 residues coordinate Ca(2+): E30 and D37. Cysteines 77 and 86 form a disulfide. 2 positions are modified to phosphoserine: S82 and S89. H91 serves as a coordination point for Zn(2+). Intrachain disulfides connect C99–C115, C114–C125, C148–C193, C192–C201, C224–C270, and C269–C277. Phosphothreonine is present on T107. K229 is subject to N6-succinyllysine. K264 provides a ligand contact to (4Z,15Z)-bilirubin IXalpha. A Ca(2+)-binding site is contributed by E268. The Zn(2+) site is built by H271 and D273. 4 residues coordinate Ca(2+): D273, E276, D279, and D283. 8 disulfide bridges follow: C289/C303, C302/C313, C340/C385, C384/C393, C416/C462, C461/C472, C485/C501, and C500/C511. A Phosphoserine modification is found at S297. A Phosphoserine modification is found at S443. Residues T444 and T446 each carry the phosphothreonine modification. K460 is modified (N6-succinyllysine). Phosphoserine is present on S513. Disulfide bonds link C538–C583 and C582–C591. At K543 the chain carries N6-succinyllysine. K558 is subject to N6-methyllysine. T570 bears the Phosphothreonine mark. An N6-succinyllysine modification is found at K588.

Belongs to the ALB/AFP/VDB family. Interacts with FCGRT; this interaction regulates ALB homeostasis. Interacts with TASOR. In plasma, occurs in a covalently-linked complex with chromophore-bound alpha-1-microglobulin; this interaction does not prevent fatty acid binding to ALB. In terms of processing, phosphorylated by FAM20C in the extracellular medium. As to expression, plasma.

It is found in the secreted. Binds water, Ca(2+), Na(+), K(+), fatty acids, hormones, bilirubin and drugs. Its main function is the regulation of the colloidal osmotic pressure of blood. Major zinc transporter in plasma, typically binds about 80% of all plasma zinc. Major calcium and magnesium transporter in plasma, binds approximately 45% of circulating calcium and magnesium in plasma. Potentially has more than two calcium-binding sites and might additionally bind calcium in a non-specific manner. The shared binding site between zinc and calcium at residue Asp-273 suggests a crosstalk between zinc and calcium transport in the blood. The rank order of affinity is zinc &gt; calcium &gt; magnesium. Binds to the bacterial siderophore enterobactin and inhibits enterobactin-mediated iron uptake of E.coli from ferric transferrin, and may thereby limit the utilization of iron and growth of enteric bacteria such as E.coli. Does not prevent iron uptake by the bacterial siderophore aerobactin. The polypeptide is Albumin (ALB) (Pongo abelii (Sumatran orangutan)).